The sequence spans 397 residues: MLNRKLVNRVEYFRVIVMAFAAFVFNTTEFVPVALLSDIADSFQMPVSNTGLMITIYAWIVSLCSLPCMLMTARLERRRLLISLFILFIASHILSAFAWNYEVLLIARAGVALTHSIFWSITAALTIRIAPKNKKTQALGLLALGSSLAMVLGLPLGRIIGQAFGWRTTFTLIGVFAALILILIVRLLPKIPSQNAGSLKSLPVLARRPMLITLYIFTILVISAHFTAYSYIEPFMIQIGRVSANKATAVLLIFGVSGVVASVLFSRLYRIAPIKFLLSSVAILTLALICLYGVSGISGAIFALVFIWGVAISALSLAMQMKVLQLAPDATDVATAIYSGIYNIGIGGGALIGNQVMQHLGLANIGYVGAVLGAVSIIWFILMFLKFSRVPLNIVNQ.

Transmembrane regions (helical) follow at residues 15–35, 51–71, 80–100, 103–123, 137–157, 169–189, 209–229, 246–266, 277–297, 299–319, 333–353, and 365–385; these read VIVM…PVAL, GLMI…CMLM, LLIS…FAWN, VLLI…SITA, QALG…LPLG, TFTL…RLLP, PMLI…FTAY, KATA…VLFS, LLSS…VSGI, GAIF…SLAM, VATA…ALIG, and IGYV…LMFL.

Belongs to the major facilitator superfamily. SotB (TC 2.A.1.2) family.

It localises to the cell inner membrane. Its function is as follows. Involved in the efflux of sugars. The physiological role may be the reduction of the intracellular concentration of toxic sugars or sugar metabolites. This is Probable sugar efflux transporter from Mannheimia succiniciproducens (strain KCTC 0769BP / MBEL55E).